The following is a 305-amino-acid chain: Flagellin FlaB2 (305 aa).

A propeptide spans 1-18 (MGLQKIVKKYNKKMKRKG) (propeptide).

It belongs to the archaeal flagellin family. Glycosylated.

It is found in the archaeal flagellum. Functionally, flagellin is the subunit protein which polymerizes to form the filaments of archaeal flagella. The protein is Flagellin FlaB2 of Saccharolobus shibatae (strain ATCC 51178 / DSM 5389 / JCM 8931 / NBRC 15437 / B12) (Sulfolobus shibatae).